Consider the following 116-residue polypeptide: Large ribosomal subunit protein bL17 (116 aa).

The protein belongs to the bacterial ribosomal protein bL17 family. Part of the 50S ribosomal subunit. Contacts protein L32.

The sequence is that of Large ribosomal subunit protein bL17 from Prochlorococcus marinus subsp. pastoris (strain CCMP1986 / NIES-2087 / MED4).